Reading from the N-terminus, the 131-residue chain is C-glycoside deglycosidase beta subunit (131 aa).

Belongs to the C-glycoside deglycosidase beta subunit family. Heterodimer composed of an alpha subunit (CarB1) and a beta subunit (CarC1). The cofactor is Mg(2+).

It carries out the reaction 3''-dehydroisovitexin = 1,5-anhydro-D-erythro-hex-1-en-3-ulose + apigenin. Activity is strongly reduced in the presence of chelating agents. Carbon-carbon bond-cleaving enzyme which participates in the metabolism of C-glycosides. Acts on the C6-glycosylated compound 3''-dehydroisovitexin (3''-oxo-isovitexin). Shows weak activity with 3''-dehydroisoorientin (3''-oxo-homoorientin) and 3'-dehydromangiferin (3'-oxo-mangiferin). In Arthrobacter globiformis (strain ATCC 8010 / DSM 20124 / JCM 1332 / NBRC 12137 / NCIMB 8907 / NRRL B-2979 / 168), this protein is C-glycoside deglycosidase beta subunit.